We begin with the raw amino-acid sequence, 143 residues long: Transcriptional regulatory protein RosR (143 aa).

Residues 79–97 (CLECGGNFKSLKRHLMTHH) form a C2H3-type zinc finger.

Belongs to the ros/MucR family.

The sequence is that of Transcriptional regulatory protein RosR (rosR) from Rhizobium etli (strain ATCC 51251 / DSM 11541 / JCM 21823 / NBRC 15573 / CFN 42).